We begin with the raw amino-acid sequence, 267 residues long: Hydroxyethylthiazole kinase (267 aa).

Methionine 46 serves as a coordination point for substrate. Arginine 122 and serine 168 together coordinate ATP. Glycine 195 contributes to the substrate binding site.

Belongs to the Thz kinase family. Requires Mg(2+) as cofactor.

The enzyme catalyses 5-(2-hydroxyethyl)-4-methylthiazole + ATP = 4-methyl-5-(2-phosphooxyethyl)-thiazole + ADP + H(+). The protein operates within cofactor biosynthesis; thiamine diphosphate biosynthesis; 4-methyl-5-(2-phosphoethyl)-thiazole from 5-(2-hydroxyethyl)-4-methylthiazole: step 1/1. Its function is as follows. Catalyzes the phosphorylation of the hydroxyl group of 4-methyl-5-beta-hydroxyethylthiazole (THZ). This Nitratidesulfovibrio vulgaris (strain DSM 19637 / Miyazaki F) (Desulfovibrio vulgaris) protein is Hydroxyethylthiazole kinase.